A 387-amino-acid chain; its full sequence is uncharacterized protein (387 aa).

It to M.jannaschii MJ0043 N-terminal region.

This is an uncharacterized protein from Bacillus subtilis (strain 168).